A 270-amino-acid chain; its full sequence is Phosphatidylglycerol--prolipoprotein diacylglyceryl transferase (270 aa).

A run of 4 helical transmembrane segments spans residues 19-39 (FPVY…LWLA), 56-76 (LVLI…VIFE), 92-112 (QGGL…ILFA), and 116-136 (GVSF…GQAI). Arg-138 lines the a 1,2-diacyl-sn-glycero-3-phospho-(1'-sn-glycerol) pocket. A run of 3 helical transmembrane segments spans residues 178–198 (HPTF…LLAL), 206–226 (GELF…VEGL), and 236–256 (LRIA…FIIV).

This sequence belongs to the Lgt family.

It localises to the cell membrane. The catalysed reaction is L-cysteinyl-[prolipoprotein] + a 1,2-diacyl-sn-glycero-3-phospho-(1'-sn-glycerol) = an S-1,2-diacyl-sn-glyceryl-L-cysteinyl-[prolipoprotein] + sn-glycerol 1-phosphate + H(+). Its pathway is protein modification; lipoprotein biosynthesis (diacylglyceryl transfer). Catalyzes the transfer of the diacylglyceryl group from phosphatidylglycerol to the sulfhydryl group of the N-terminal cysteine of a prolipoprotein, the first step in the formation of mature lipoproteins. In Bacillus cereus (strain Q1), this protein is Phosphatidylglycerol--prolipoprotein diacylglyceryl transferase.